The following is a 378-amino-acid chain: MTKPAILALADGSIFRGEAIGADGQTVGEVVFNTAMTGYQEILTDPSYAQQIVTLTYPHIGNTGTTPEDAEANRVWAAGLIIRDLPLIASNWRSKQSLPDYLKANGTVAIAGIDTRRLTRILREKGSQNGCILAGADATEERALELARAFPGLKGMDLAKEVTTAERYEWRSSVWNLESDSHPEIPAGELPYHVVAYDYGVKLNILRMLVARGCRLTVVPAQTPASEVLALNPDGIFLSNGPGDPEPCDYAIQAIREFLDTEIPVFGICLGHQLLALASGAKTLKMGHGHHGANHPVQDLDSGVVMITSQNHGFAVDESTLPDNLRATHKSLFDGTLQGIERTDKVAFSFQGHPEASPGPHDVAPLFDRFISAMAERR.

A CPSase region spans residues 1 to 189; that stretch reads MTKPAILALA…DSHPEIPAGE (189 aa). 3 residues coordinate L-glutamine: S47, G241, and G243. The region spanning 193-378 is the Glutamine amidotransferase type-1 domain; sequence HVVAYDYGVK…RFISAMAERR (186 aa). The Nucleophile role is filled by C269. L270, Q273, N311, G313, and F314 together coordinate L-glutamine. Active-site residues include H353 and E355.

It belongs to the CarA family. In terms of assembly, composed of two chains; the small (or glutamine) chain promotes the hydrolysis of glutamine to ammonia, which is used by the large (or ammonia) chain to synthesize carbamoyl phosphate. Tetramer of heterodimers (alpha,beta)4.

The enzyme catalyses hydrogencarbonate + L-glutamine + 2 ATP + H2O = carbamoyl phosphate + L-glutamate + 2 ADP + phosphate + 2 H(+). It carries out the reaction L-glutamine + H2O = L-glutamate + NH4(+). It participates in amino-acid biosynthesis; L-arginine biosynthesis; carbamoyl phosphate from bicarbonate: step 1/1. It functions in the pathway pyrimidine metabolism; UMP biosynthesis via de novo pathway; (S)-dihydroorotate from bicarbonate: step 1/3. In terms of biological role, small subunit of the glutamine-dependent carbamoyl phosphate synthetase (CPSase). CPSase catalyzes the formation of carbamoyl phosphate from the ammonia moiety of glutamine, carbonate, and phosphate donated by ATP, constituting the first step of 2 biosynthetic pathways, one leading to arginine and/or urea and the other to pyrimidine nucleotides. The small subunit (glutamine amidotransferase) binds and cleaves glutamine to supply the large subunit with the substrate ammonia. The polypeptide is Carbamoyl phosphate synthase small chain (Pseudomonas aeruginosa (strain ATCC 15692 / DSM 22644 / CIP 104116 / JCM 14847 / LMG 12228 / 1C / PRS 101 / PAO1)).